A 686-amino-acid chain; its full sequence is Lysophospholipase 3 (686 aa).

The N-terminal stretch at 1–26 (MIRPLCSKIIISYIFAISQFLLAANA) is a signal peptide. Residues 39–592 (SCPDDINLVR…KNYCWNGTLD (554 aa)) form the PLA2c domain. 14 N-linked (GlcNAc...) asparagine glycosylation sites follow: asparagine 56, asparagine 82, asparagine 129, asparagine 166, asparagine 221, asparagine 283, asparagine 313, asparagine 351, asparagine 495, asparagine 519, asparagine 547, asparagine 571, asparagine 588, and asparagine 614. A lipid anchor (GPI-anchor amidated asparagine) is attached at asparagine 659. Residues 660–686 (SGSHLSGISVKFSAMIMLTLLMFTGAV) constitute a propeptide, removed in mature form.

Belongs to the lysophospholipase family.

It is found in the cell membrane. It catalyses the reaction a 1-acyl-sn-glycero-3-phosphocholine + H2O = sn-glycerol 3-phosphocholine + a fatty acid + H(+). Functionally, sequentially removes both fatty acyl groups from diacylglycerophospholipids and therefore has both phospholipase A and lysophospholipase activities. Substrate preference is phosphatidylserine &gt; phosphatidylinositol. Does not cleave phosphatidylcholine, phosphatidylethanolamine, phosphatidic acid and phosphatidylinositol-bisphosphate. Mainly responsible for the degradation of phosphatidylinositol in vivo. This chain is Lysophospholipase 3 (PLB3), found in Saccharomyces cerevisiae (strain ATCC 204508 / S288c) (Baker's yeast).